A 454-amino-acid chain; its full sequence is G-protein coupled receptor 39 (454 aa).

Over 1-34 (MASPSHPSRDCSQVIDHSHVPEFEVATWIKITLI) the chain is Extracellular. Intrachain disulfides connect C11–C191 and C108–C210. Positions 17 and 19 each coordinate Zn(2+). The helical transmembrane segment at 35 to 55 (LVYLVIFVVGILGNSVTIRVT) threads the bilayer. Residues 56–69 (QVLQKKGYLQKEVT) lie on the Cytoplasmic side of the membrane. The chain crosses the membrane as a helical span at residues 70–89 (DHMVSLACSDILVFLIGMPM). At 90–109 (EFYSIIWNPLTTPSYTVSCK) the chain is on the extracellular side. Residues 110-131 (VHTFLFEACSYATLLHVLTLSF) form a helical membrane-spanning segment. The Cytoplasmic segment spans residues 132–151 (ERYIAICHPFRYKAMSGPCQ). Residues 152–172 (VKLLIGFVWVTSALVALPLLF) traverse the membrane as a helical segment. The Extracellular segment spans residues 173 to 217 (AMGVEYPLVNVPSHRGLICNRSRTRHQEQPESSNMSICTNLSSRW). N-linked (GlcNAc...) asparagine glycosylation is found at N192, N206, and N212. A helical membrane pass occupies residues 218–242 (TVFQSSIFSAFVVYLVVLVSVAFMC). Residues 243–283 (WSMMQVLRRSKQGTLAAQGQQLQLRKLESQESRSARRQTII) lie on the Cytoplasmic side of the membrane. The helical transmembrane segment at 284 to 305 (FLELIVVTLAVCWMPNQVRRIM) threads the bilayer. Residues 306-323 (AAAKPKHDWTKSYFRAYM) lie on the Extracellular side of the membrane. A helical membrane pass occupies residues 324-344 (ILLPFSDTFFYLSSVVNPLLY). Topologically, residues 345-454 (NVSSQQFRSV…TRNGFQEHEV (110 aa)) are cytoplasmic. Position 397 is a phosphoserine (S397). Positions 415 to 454 (HSEAKPESKPQELSCESPEPNSERKPANPATRNGFQEHEV) are disordered.

The protein belongs to the G-protein coupled receptor 1 family. In terms of assembly, interacts with HTR1A. Interacts with GALR1. As to expression, detected in liver, kidney, abomasum, uterus, small intestine and colon.

Its subcellular location is the cell membrane. Zinc-sensing receptor that can sense changes in extracellular Zn(2+), mediate Zn(2+) signal transmission, and participates in the regulation of numerous physiological processes including glucose homeostasis regulation, gastrointestinal mobility, hormone secretion and cell death. Activation by Zn(2+) in keratinocytes increases the intracellular concentration of Ca(2+) and activates the ERK/MAPK and PI3K/AKT signaling pathways leading to epithelial repair. Plays an essential role in normal wound healing by inducing the production of cytokines including the major inflammatory cytokine IL6 via the PKC/MAPK/CEBPB pathway. Regulates adipose tissue metabolism, especially lipolysis, and regulates the function of lipases, such as hormone-sensitive lipase and adipose triglyceride lipase. Plays a role in the inhibition of cell death and protects against oxidative, endoplasmic reticulum and mitochondrial stress by inducing secretion of the cytoprotective pigment epithelium-derived growth factor (PEDF) and probably other protective transcripts in a GNA13/RHOA/SRE-dependent manner. Forms dynamic heteroreceptor complexes with HTR1A and GALR1 depending on cell type or specific physiological states, resulting in signaling diversity: HTR1A-GPR39 shows additive increase in signaling along the serum response element (SRE) and NF-kappa-B pathways while GALR1 acts as an antagonist blocking SRE. The chain is G-protein coupled receptor 39 (GPR39) from Bos taurus (Bovine).